The following is a 122-amino-acid chain: Large ribosomal subunit protein uL14 (122 aa).

The protein belongs to the universal ribosomal protein uL14 family. As to quaternary structure, part of the 50S ribosomal subunit. Forms a cluster with proteins L3 and L19. In the 70S ribosome, L14 and L19 interact and together make contacts with the 16S rRNA in bridges B5 and B8.

Binds to 23S rRNA. Forms part of two intersubunit bridges in the 70S ribosome. This is Large ribosomal subunit protein uL14 from Nitrosococcus oceani (strain ATCC 19707 / BCRC 17464 / JCM 30415 / NCIMB 11848 / C-107).